The sequence spans 639 residues: Threonine--tRNA ligase (639 aa).

Residues 1 to 61 form the TGS domain; that stretch reads MIKVALKDGS…DTDCDLNLFK (61 aa). Residues 242–532 are catalytic; that stretch reads DHRKLGKELG…LIEHYAGKFP (291 aa). Residues Cys-333, His-384, and His-509 each coordinate Zn(2+).

This sequence belongs to the class-II aminoacyl-tRNA synthetase family. As to quaternary structure, homodimer. Zn(2+) is required as a cofactor.

It localises to the cytoplasm. The catalysed reaction is tRNA(Thr) + L-threonine + ATP = L-threonyl-tRNA(Thr) + AMP + diphosphate + H(+). In terms of biological role, catalyzes the attachment of threonine to tRNA(Thr) in a two-step reaction: L-threonine is first activated by ATP to form Thr-AMP and then transferred to the acceptor end of tRNA(Thr). Also edits incorrectly charged L-seryl-tRNA(Thr). The sequence is that of Threonine--tRNA ligase from Clostridioides difficile (strain 630) (Peptoclostridium difficile).